The primary structure comprises 226 residues: MSCCAYFRGRDCLQTYEDHITQALEACERLRPYYGRWMEKAFGTADAAALAVEFHDLGKLAKAYIAGNRARYRHEVLGAYFALKTLQTEARYYVAAAVALHHEPMILAAYAGELGERAIHVSTLRAMLKDSDLSLGCTPNYSYRPEVAAALREWASRPPTADDVADAFQELAVYLSGGAPEEARVKRLRVAGLLHVLTVCDNWGARGRPGEGTFISRYMTVSELGL.

The HD Cas3-type domain occupies 9–204 (GRDCLQTYED…HVLTVCDNWG (196 aa)). Residues Asp-56, His-74, His-101, and His-102 each contribute to the Mg(2+) site.

The protein belongs to the CRISPR-associated nuclease Cas3-HD family. In terms of assembly, monomer. Can form a Cascade complex with Csa5, Cas7, Cas5a, Cas3 and Cas8a2. It depends on Mg(2+) as a cofactor.

Its function is as follows. CRISPR (clustered regularly interspaced short palindromic repeat), is an adaptive immune system that provides protection against mobile genetic elements (viruses, transposable elements and conjugative plasmids). CRISPR clusters contain sequences complementary to antecedent mobile elements and target invading nucleic acids. CRISPR clusters are transcribed and processed into CRISPR RNA (crRNA). Cas3 plus Cascade participate in CRISPR interference, the third stage of CRISPR immunity. Acts as a ssDNA and ssRNA nuclease, probably with both exo- and endonuclease activities. Activity is higher for DNA than RNA. The polypeptide is CRISPR-associated endonuclease Cas3-HD (cas3') (Thermoproteus tenax (strain ATCC 35583 / DSM 2078 / JCM 9277 / NBRC 100435 / Kra 1)).